A 171-amino-acid polypeptide reads, in one-letter code: MKYGVVLFPSKKLQDIANSYRKRYDPNYALIPPHLTLRTPFELTDLEAAEVVSTLREYAKNASPITLRIKKFSSFAPVNNVIYMKVEPNEEIMALNERLYADPLEGTPEYAFVPHVTVAQKLSDDEHSDVLGTLKLRKIDHEETVDRFHLLYQLENGSWTVYETFILGEEG.

Residue His-34 is the Proton donor of the active site. Short sequence motifs (HXTX) lie at residues 34–37 (HLTL) and 115–118 (HVTV). His-115 serves as the catalytic Proton acceptor.

This sequence belongs to the 2H phosphoesterase superfamily. YjcG family.

This chain is Putative phosphoesterase BPUM_1117, found in Bacillus pumilus (strain SAFR-032).